The sequence spans 62 residues: Zinc finger-containing protein P28b (62 aa).

The segment at 1 to 46 (MKLFTQNDRYFGLLDSCTHIFCITCINIWHKTRRETGASDNCPICR) adopts an RING-type; degenerate zinc-finger fold.

This is Zinc finger-containing protein P28b from Vaccinia virus (strain Western Reserve) (VACV).